The primary structure comprises 107 residues: ATP synthase peripheral stalk subunit F6, mitochondrial (107 aa).

A mitochondrion-targeting transit peptide spans 1–31 (MILQRLFRFSVIRSAVSVYLRRNIGVTAVAF). K40, K45, and K78 each carry N6-acetyllysine. An N6-acetyllysine; alternate mark is found at K93 and K98. K93 and K98 each carry N6-succinyllysine; alternate. The residue at position 104 (K104) is an N6-acetyllysine.

This sequence belongs to the eukaryotic ATPase subunit F6 family. As to quaternary structure, component of the ATP synthase complex composed at least of ATP5F1A/subunit alpha, ATP5F1B/subunit beta, ATP5MC1/subunit c (homooctomer), MT-ATP6/subunit a, MT-ATP8/subunit 8, ATP5ME/subunit e, ATP5MF/subunit f, ATP5MG/subunit g, ATP5MK/subunit k, ATP5MJ/subunit j, ATP5F1C/subunit gamma, ATP5F1D/subunit delta, ATP5F1E/subunit epsilon, ATP5PF/subunit F6, ATP5PB/subunit b, ATP5PD/subunit d, ATP5PO/subunit OSCP. ATP synthase complex consists of a soluble F(1) head domain (subunits alpha(3) and beta(3)) - the catalytic core - and a membrane F(0) domain - the membrane proton channel (subunits c, a, 8, e, f, g, k and j). These two domains are linked by a central stalk (subunits gamma, delta, and epsilon) rotating inside the F1 region and a stationary peripheral stalk (subunits F6, b, d, and OSCP).

It localises to the mitochondrion. Its subcellular location is the mitochondrion inner membrane. Subunit F6, of the mitochondrial membrane ATP synthase complex (F(1)F(0) ATP synthase or Complex V) that produces ATP from ADP in the presence of a proton gradient across the membrane which is generated by electron transport complexes of the respiratory chain. ATP synthase complex consist of a soluble F(1) head domain - the catalytic core - and a membrane F(1) domain - the membrane proton channel. These two domains are linked by a central stalk rotating inside the F(1) region and a stationary peripheral stalk. During catalysis, ATP synthesis in the catalytic domain of F(1) is coupled via a rotary mechanism of the central stalk subunits to proton translocation. In vivo, can only synthesize ATP although its ATP hydrolase activity can be activated artificially in vitro. Part of the complex F(0) domain. Part of the complex F(0) domain and the peripheric stalk, which acts as a stator to hold the catalytic alpha(3)beta(3) subcomplex and subunit a/ATP6 static relative to the rotary elements. The chain is ATP synthase peripheral stalk subunit F6, mitochondrial from Pongo abelii (Sumatran orangutan).